A 743-amino-acid chain; its full sequence is Phosphoribosylformylglycinamidine synthase subunit PurL (743 aa).

His-50 is an active-site residue. 2 residues coordinate ATP: Tyr-53 and Lys-92. Glu-94 contacts Mg(2+). Substrate-binding positions include 95 to 98 and Arg-117; that span reads SHNH. His-96 serves as the catalytic Proton acceptor. Residue Asp-118 participates in Mg(2+) binding. Gln-241 is a binding site for substrate. Asp-269 provides a ligand contact to Mg(2+). 313 to 315 serves as a coordination point for substrate; sequence ESQ. ATP is bound by residues Asp-494 and Gly-531. Residue Asn-532 coordinates Mg(2+). Ser-534 lines the substrate pocket.

This sequence belongs to the FGAMS family. Monomer. Part of the FGAM synthase complex composed of 1 PurL, 1 PurQ and 2 PurS subunits.

It localises to the cytoplasm. The catalysed reaction is N(2)-formyl-N(1)-(5-phospho-beta-D-ribosyl)glycinamide + L-glutamine + ATP + H2O = 2-formamido-N(1)-(5-O-phospho-beta-D-ribosyl)acetamidine + L-glutamate + ADP + phosphate + H(+). The protein operates within purine metabolism; IMP biosynthesis via de novo pathway; 5-amino-1-(5-phospho-D-ribosyl)imidazole from N(2)-formyl-N(1)-(5-phospho-D-ribosyl)glycinamide: step 1/2. In terms of biological role, part of the phosphoribosylformylglycinamidine synthase complex involved in the purines biosynthetic pathway. Catalyzes the ATP-dependent conversion of formylglycinamide ribonucleotide (FGAR) and glutamine to yield formylglycinamidine ribonucleotide (FGAM) and glutamate. The FGAM synthase complex is composed of three subunits. PurQ produces an ammonia molecule by converting glutamine to glutamate. PurL transfers the ammonia molecule to FGAR to form FGAM in an ATP-dependent manner. PurS interacts with PurQ and PurL and is thought to assist in the transfer of the ammonia molecule from PurQ to PurL. The polypeptide is Phosphoribosylformylglycinamidine synthase subunit PurL (Rhizobium meliloti (strain 1021) (Ensifer meliloti)).